A 72-amino-acid polypeptide reads, in one-letter code: Translation initiation factor IF-1 (72 aa).

An S1-like domain is found at 1-72; sequence MSKEELLEFP…TKGRITYRFK (72 aa).

Belongs to the IF-1 family. In terms of assembly, component of the 30S ribosomal translation pre-initiation complex which assembles on the 30S ribosome in the order IF-2 and IF-3, IF-1 and N-formylmethionyl-tRNA(fMet); mRNA recruitment can occur at any time during PIC assembly.

It localises to the cytoplasm. Its function is as follows. One of the essential components for the initiation of protein synthesis. Stabilizes the binding of IF-2 and IF-3 on the 30S subunit to which N-formylmethionyl-tRNA(fMet) subsequently binds. Helps modulate mRNA selection, yielding the 30S pre-initiation complex (PIC). Upon addition of the 50S ribosomal subunit IF-1, IF-2 and IF-3 are released leaving the mature 70S translation initiation complex. In Parvibaculum lavamentivorans (strain DS-1 / DSM 13023 / NCIMB 13966), this protein is Translation initiation factor IF-1.